The sequence spans 71 residues: Long neurotoxin 3 (71 aa).

5 disulfide bridges follow: C3–C20, C14–C41, C26–C30, C45–C56, and C57–C62.

It belongs to the three-finger toxin family. Long-chain subfamily. Type II alpha-neurotoxin sub-subfamily. In terms of tissue distribution, expressed by the venom gland.

The protein resides in the secreted. Its function is as follows. Binds with high affinity to muscular (alpha-1/CHRNA1) and neuronal (alpha-7/CHRNA7) nicotinic acetylcholine receptor (nAChR) and inhibits acetylcholine from binding to the receptor, thereby impairing neuromuscular and neuronal transmission. The sequence is that of Long neurotoxin 3 from Naja naja (Indian cobra).